A 261-amino-acid polypeptide reads, in one-letter code: Triosephosphate isomerase (261 aa).

10-12 lines the substrate pocket; that stretch reads NWK. H100 acts as the Electrophile in catalysis. E172 functions as the Proton acceptor in the catalytic mechanism. Substrate is bound by residues G178, S218, and 239–240; that span reads GG.

The protein belongs to the triosephosphate isomerase family. As to quaternary structure, homodimer.

The protein resides in the cytoplasm. The enzyme catalyses D-glyceraldehyde 3-phosphate = dihydroxyacetone phosphate. Its pathway is carbohydrate biosynthesis; gluconeogenesis. It participates in carbohydrate degradation; glycolysis; D-glyceraldehyde 3-phosphate from glycerone phosphate: step 1/1. Its function is as follows. Involved in the gluconeogenesis. Catalyzes stereospecifically the conversion of dihydroxyacetone phosphate (DHAP) to D-glyceraldehyde-3-phosphate (G3P). This chain is Triosephosphate isomerase, found in Mycobacteroides abscessus (strain ATCC 19977 / DSM 44196 / CCUG 20993 / CIP 104536 / JCM 13569 / NCTC 13031 / TMC 1543 / L948) (Mycobacterium abscessus).